The sequence spans 188 residues: Peptidyl-tRNA hydrolase (188 aa).

Tyr14 is a tRNA binding site. His19 acts as the Proton acceptor in catalysis. 3 residues coordinate tRNA: Tyr64, Asn66, and Asn113.

The protein belongs to the PTH family. Monomer.

Its subcellular location is the cytoplasm. It carries out the reaction an N-acyl-L-alpha-aminoacyl-tRNA + H2O = an N-acyl-L-amino acid + a tRNA + H(+). In terms of biological role, hydrolyzes ribosome-free peptidyl-tRNAs (with 1 or more amino acids incorporated), which drop off the ribosome during protein synthesis, or as a result of ribosome stalling. Functionally, catalyzes the release of premature peptidyl moieties from peptidyl-tRNA molecules trapped in stalled 50S ribosomal subunits, and thus maintains levels of free tRNAs and 50S ribosomes. The polypeptide is Peptidyl-tRNA hydrolase (Chloroflexus aggregans (strain MD-66 / DSM 9485)).